The sequence spans 199 residues: Urease accessory protein UreG (199 aa).

8–15 (GPVGSGKT) is a binding site for GTP.

It belongs to the SIMIBI class G3E GTPase family. UreG subfamily. In terms of assembly, homodimer. UreH, UreF and UreG form a complex that acts as a GTP-hydrolysis-dependent molecular chaperone, activating the urease apoprotein by helping to assemble the nickel containing metallocenter of UreC. The UreE protein probably delivers the nickel.

It localises to the cytoplasm. Its function is as follows. Facilitates the functional incorporation of the urease nickel metallocenter. This process requires GTP hydrolysis, probably effectuated by UreG. This is Urease accessory protein UreG from Helicobacter acinonychis (strain Sheeba).